Here is a 260-residue protein sequence, read N- to C-terminus: Protein phosphatase 1 regulatory subunit 35 (260 aa).

Residues 1–100 (MMGFGASALE…PLLVAGAPGD (100 aa)) form a disordered region. A phosphoserine mark is found at Ser-46 and Ser-53. A compositionally biased stretch (basic residues) spans 64-76 (RKGRRGGSRRGRQ).

It belongs to the PPP1R35 family. Interacts with PPP1CA; this interaction mediates the PPP1CA phosphatase activity inhibition. Interacts with RTTN; this interaction allows the mutual recruitment to the centriole.

It is found in the cytoplasm. It localises to the cytoskeleton. The protein resides in the microtubule organizing center. Its subcellular location is the centrosome. The protein localises to the centriole. In terms of biological role, during centriole duplication, plays a role in the centriole elongation by promoting the recruitment of the microtubule-binding elongation machinery through its interaction with TTTN, leading to the centriole to centrosome conversion. In addition may play a role in the primary cilia assembly. The protein is Protein phosphatase 1 regulatory subunit 35 of Mus musculus (Mouse).